Reading from the N-terminus, the 742-residue chain is Collectin-12 (742 aa).

Residues 1–37 (MKDDFAEEEEVQSFGYKRFGIQEGTQCTKCKNNWALK) lie on the Cytoplasmic side of the membrane. The chain crosses the membrane as a helical; Signal-anchor for type II membrane protein span at residues 38–58 (FSIILLYILCALLTITVAILG). At 59–742 (YKVVEKMDNV…DRETVLSSAL (684 aa)) the chain is on the extracellular side. A glycan (N-linked (GlcNAc...) asparagine) is linked at N67. Residues 73 to 141 (ETSRQTYDDK…NKDTLEKLQA (69 aa)) are a coiled coil. N159, N168, and N271 each carry an N-linked (GlcNAc...) asparagine glycan. A coiled-coil region spans residues 215 to 328 (QQRNLITNLQ…KDAENRTAIK (114 aa)). The interval 439-608 (TILQGPPGPR…TPAPEDNGCP (170 aa)) is disordered. Collagen-like domains lie at 443–472 (GPPGPRGPRGDRGSQGPPGPTGNKGQKGEK), 473–529 (GEPG…PGPP), and 530–589 (GPPG…SGAV). Composition is skewed to low complexity over residues 502–525 (KGSQGPKGSRGSPGKPGPQGSSGD) and 534–556 (KEGLPGPQGPPGFQGLQGTVGEP). Positions 571-585 (PGMPGPKGPPGPPGP) are enriched in pro residues. Disulfide bonds link C607–C618, C635–C730, and C708–C722. The C-type lectin domain maps to 614–731 (FTDKCYYFSV…CEDVNNFICE (118 aa)). The Ca(2+) site is built by F644, N646, E650, D670, and E674. K691, Q694, and D696 together coordinate a carbohydrate. Ca(2+) contacts are provided by Q694, D696, N697, E706, D707, N718, D719, and E731. E706 lines the a carbohydrate pocket. A carbohydrate is bound by residues N718 and D719.

In terms of assembly, the extracellular domain forms a stable trimer. The extracellular domain interacts with fibrillar amyloid-beta peptide. In terms of tissue distribution, expressed in perivascular macrophages. Expressed in plaques-surrounding reactive astrocytes and in perivascular astrocytes associated with cerebral amyloid angiopathy (CAA) in the temporal cortex of Alzheimer patient (at protein level). Strongly expressed in placenta. Moderately expressed in heart, skeletal muscle, small intestine and lung. Weakly expressed in brain, colon, thymus and kidney. Expressed in nurse-like cells. Expressed in reactive astrocytes and vascular/perivascular cells in the brain of Alzheimer patient.

It is found in the membrane. In terms of biological role, scavenger receptor that displays several functions associated with host defense. Promotes binding and phagocytosis of Gram-positive, Gram-negative bacteria and yeast. Mediates the recognition, internalization and degradation of oxidatively modified low density lipoprotein (oxLDL) by vascular endothelial cells. Binds to several carbohydrates including Gal-type ligands, D-galactose, L- and D-fucose, GalNAc, T and Tn antigens in a calcium-dependent manner and internalizes specifically GalNAc in nurse-like cells. Also binds to sialyl Lewis X or a trisaccharide and asialo-orosomucoid (ASOR). May also play a role in the clearance of amyloid-beta in Alzheimer disease. The protein is Collectin-12 (COLEC12) of Homo sapiens (Human).